A 527-amino-acid chain; its full sequence is Peptide chain release factor 3 (527 aa).

Positions 9-277 constitute a tr-type G domain; that stretch reads AKRRTFAIIS…CIVDWAPQPL (269 aa). GTP is bound by residues 18–25, 86–90, and 140–143; these read SHPDAGKT, DTPGH, and NKLD.

It belongs to the TRAFAC class translation factor GTPase superfamily. Classic translation factor GTPase family. PrfC subfamily.

The protein localises to the cytoplasm. Increases the formation of ribosomal termination complexes and stimulates activities of RF-1 and RF-2. It binds guanine nucleotides and has strong preference for UGA stop codons. It may interact directly with the ribosome. The stimulation of RF-1 and RF-2 is significantly reduced by GTP and GDP, but not by GMP. In Pseudomonas aeruginosa (strain LESB58), this protein is Peptide chain release factor 3.